A 235-amino-acid chain; its full sequence is MKLVQEEYRKGPWTEQEDILLVNFVHLFGDRRWDFVAKVSGLNRTGKSCRLRWVNYLHPGLKRGKMTPQEERLVLELHAKWGNRWSKIARKLPGRTDNEIKNYWRTHMRKKAQEKKRPMSPTSSSSNCCSSSMTTTTSQDTGGSNGKMNQECEDGYYSMDDIWREIDQSGANVIKPVKDNYYSEQSCYLNFPPLASPTWESSLESIWNMDADESKMSSFAIDQFPLSFEHGSGRL.

HTH myb-type domains are found at residues 5–57 (QEEY…VNYL) and 58–112 (HPGL…RKKA). A DNA-binding region (H-T-H motif) is located at residues 33 to 57 (WDFVAKVSGLNRTGKSCRLRWVNYL). Residues 62 to 65 (KRGK) carry the Bipartite nuclear localization signal 1 motif. The H-T-H motif DNA-binding region spans 85-108 (WSKIARKLPGRTDNEIKNYWRTHM). The Bipartite nuclear localization signal 2 signature appears at 109–117 (RKKAQEKKR). A disordered region spans residues 109–147 (RKKAQEKKRPMSPTSSSSNCCSSSMTTTTSQDTGGSNGK). Residues 119–138 (MSPTSSSSNCCSSSMTTTTS) are compositionally biased toward low complexity.

As to expression, mainly expressed in leaves and seedlings, and to a lower extent, in roots, stems and inflorescences. Isoform MYB59-1 and isoform MYB59-2 are present in roots, leaves, and seedlings, while the expression of isoform MYB59-3 and isoform MYB59-4 is confined to seedlings.

It localises to the nucleus. Transcription factor. The polypeptide is Transcription factor MYB59 (MYB59) (Arabidopsis thaliana (Mouse-ear cress)).